We begin with the raw amino-acid sequence, 799 residues long: Heat shock protein 90-6, mitochondrial (799 aa).

A mitochondrion-targeting transit peptide spans 1–48; sequence MIRLSKRSVSTLLRSGNQSFRIAAAASTSRSSPSATDVKRSDTESRWY. Over residues 23–35 the composition is skewed to low complexity; sequence AAAASTSRSSPSA. The disordered stretch occupies residues 23-61; it reads AAAASTSRSSPSATDVKRSDTESRWYSSLTNGQSKNSGS. The segment covering 46-61 has biased composition (polar residues); the sequence is RWYSSLTNGQSKNSGS. ATP is bound by residues Glu124, Asn128, Asp170, Met175, 190 to 191, 214 to 219, and Thr269; these read SG and QFGVGF. The interval 314 to 337 is disordered; the sequence is EVEVEDDPTETKKDDQDDQTEKKK. Basic and acidic residues predominate over residues 322 to 334; sequence TETKKDDQDDQTE. Arg464 serves as a coordination point for ATP. The segment covering 766-777 has biased composition (polar residues); it reads SPEVQPQQQQMA. The interval 766 to 799 is disordered; that stretch reads SPEVQPQQQQMAHSHDAETFEAEVVEPVEVDGKK. The segment covering 784-799 has biased composition (acidic residues); sequence TFEAEVVEPVEVDGKK.

It belongs to the heat shock protein 90 family. In terms of assembly, interacts with P23-1.

Its subcellular location is the mitochondrion. Molecular chaperone which stabilizes unfolding protein intermediates and functions as a folding molecular chaperone that assists the non-covalent folding of proteins in an ATP-dependent manner. The polypeptide is Heat shock protein 90-6, mitochondrial (Arabidopsis thaliana (Mouse-ear cress)).